Consider the following 349-residue polypeptide: tRNA pseudouridine synthase D (349 aa).

Phe27 is a binding site for substrate. Asp80 functions as the Nucleophile in the catalytic mechanism. Residue Asn129 participates in substrate binding. Residues 155-303 form the TRUD domain; that stretch reads GVPNYFGAQR…VEAARRAMLL (149 aa). Position 329 (Phe329) interacts with substrate.

Belongs to the pseudouridine synthase TruD family.

It catalyses the reaction uridine(13) in tRNA = pseudouridine(13) in tRNA. Functionally, responsible for synthesis of pseudouridine from uracil-13 in transfer RNAs. This is tRNA pseudouridine synthase D from Klebsiella pneumoniae (strain 342).